The primary structure comprises 277 residues: Transcription factor WRKY19 (277 aa).

A DNA-binding region (WRKY) is located at residues glutamine 100–alanine 168.

The protein belongs to the WRKY group III family.

The protein resides in the nucleus. In terms of biological role, may play a role in defense responses. The polypeptide is Transcription factor WRKY19 (Oryza sativa subsp. japonica (Rice)).